Here is an 845-residue protein sequence, read N- to C-terminus: Ribosome-releasing factor 2, mitochondrial (845 aa).

Residues 1–28 (MIIATSLRSQTFCTWRAWRAVHSTAVRL) constitute a mitochondrion transit peptide. Positions 38-330 (DRTRNIGIIA…GVVKYLPSPL (293 aa)) constitute a tr-type G domain. Residues 47–54 (AHIDAGKT), 111–115 (DTPGH), and 165–168 (NKMD) contribute to the GTP site.

Belongs to the TRAFAC class translation factor GTPase superfamily. Classic translation factor GTPase family. EF-G/EF-2 subfamily.

The protein resides in the mitochondrion. Functionally, mitochondrial GTPase that mediates the disassembly of ribosomes from messenger RNA at the termination of mitochondrial protein biosynthesis. Not involved in the GTP-dependent ribosomal translocation step during translation elongation. The sequence is that of Ribosome-releasing factor 2, mitochondrial from Scheffersomyces stipitis (strain ATCC 58785 / CBS 6054 / NBRC 10063 / NRRL Y-11545) (Yeast).